A 527-amino-acid polypeptide reads, in one-letter code: Optineurin (527 aa).

Disordered stretches follow at residues Met-1–Leu-32 and Ser-101–Leu-143. Residues Glu-38–Ser-170 adopt a coiled-coil conformation. The interaction with Rab8 stretch occupies residues Met-58–Arg-209. The short motif at Asp-176–Ile-181 is the LIR element. Position 177 is a phosphoserine; by TBK1 (Ser-177). Over residues Gly-186–His-197 the composition is skewed to basic and acidic residues. Disordered stretches follow at residues Gly-186–Tyr-214 and Ser-262–Leu-292. Ser-198 is modified (phosphoserine). The span at Pro-201 to Ala-210 shows a compositional bias: polar residues. A coiled-coil region spans residues Cys-239 to Asp-458. Composition is skewed to basic and acidic residues over residues Ser-262–Ile-274 and Ser-281–Leu-292. Residues Thr-361–Ile-527 form an interaction with HD region. The interval Arg-362–Arg-470 is interaction with MYO6. A UBAN motif is present at residues Asp-424–Arg-429. Ser-476 is subject to Phosphoserine. The CCHC NOA-type zinc finger occupies Gln-497–Ile-527. Cys-505, Cys-508, His-521, and Cys-525 together coordinate Zn(2+).

As to quaternary structure, self-associates. Interacts with HD. Interacts with GTF3A. Interacts with MYO6. Interacts (via UBAN) with ubiquitinated TFRC. Interacts with GTP-bound Rab8 (RAB8A and/or RAB8B). Interacts with TBC1D17. Interacts with TBK1. Interacts with TRAF3. Binds to linear ubiquitin chains. Interacts with LC3 family members MAP1LC3A, MAP1LC3B, GABARAP, GABARAPL1 and GABARAPL2; OPTN phosphorylation increases the association (at least with MAP1LC3B). Interacts with RAB12; the interaction may be indirect. Interacts with TBK1; this interaction leads to the Golgi localization of TBK1 and its subsequent activation. Interacts with palmitoyltransferase ZDHHC17/HIP14; the interaction does not lead to palmitoylation of OPTN. Interacts with CYLD. Interacts with TOM1; the interaction is indirect and is mediated by MYO6, which acts as a bridge between TOM1 and OPTN. Interacts with USP12; the interaction is independent of USP12 deubiquitinase activity and may be involved in regulation of autophagic flux. In terms of processing, phosphorylated by TBK1, leading to restrict bacterial proliferation in case of infection.

Its subcellular location is the cytoplasm. It is found in the perinuclear region. The protein localises to the golgi apparatus. It localises to the trans-Golgi network. The protein resides in the cytoplasmic vesicle. Its subcellular location is the autophagosome. It is found in the recycling endosome. Plays an important role in the maintenance of the Golgi complex, in membrane trafficking, in exocytosis, through its interaction with myosin VI and Rab8. Links myosin VI to the Golgi complex and plays an important role in Golgi ribbon formation. Negatively regulates the induction of IFNB in response to RNA virus infection. Plays a neuroprotective role in the eye and optic nerve. Probably part of the TNF-alpha signaling pathway that can shift the equilibrium toward induction of cell death. May act by regulating membrane trafficking and cellular morphogenesis via a complex that contains Rab8 and huntingtin (HD). Mediates the interaction of Rab8 with the probable GTPase-activating protein TBC1D17 during Rab8-mediated endocytic trafficking, such as that of transferrin receptor (TFRC/TfR); regulates Rab8 recruitment to tubules emanating from the endocytic recycling compartment. Autophagy receptor that interacts directly with both the cargo to become degraded and an autophagy modifier of the MAP1 LC3 family; targets ubiquitin-coated bacteria (xenophagy) and appears to function in the same pathway as SQSTM1 and CALCOCO2/NDP52. The sequence is that of Optineurin (OPTN) from Pongo abelii (Sumatran orangutan).